A 283-amino-acid polypeptide reads, in one-letter code: 5'-nucleotidase SurE (283 aa).

Residues aspartate 14, aspartate 15, serine 47, and asparagine 105 each contribute to the a divalent metal cation site.

This sequence belongs to the SurE nucleotidase family. Requires a divalent metal cation as cofactor.

Its subcellular location is the cytoplasm. It catalyses the reaction a ribonucleoside 5'-phosphate + H2O = a ribonucleoside + phosphate. In terms of biological role, nucleotidase that shows phosphatase activity on nucleoside 5'-monophosphates. The protein is 5'-nucleotidase SurE of Chlamydia trachomatis serovar A (strain ATCC VR-571B / DSM 19440 / HAR-13).